The primary structure comprises 198 residues: Probable GTP-binding protein EngB (198 aa).

Residues 27 to 198 form the EngB-type G domain; the sequence is DLPEVALAGR…ESWDTILSEL (172 aa). GTP is bound by residues 35-42, 62-66, 80-83, 147-150, and 179-181; these read GRSNVGKS, GKTQL, DVPG, TKAD, and FSS. 2 residues coordinate Mg(2+): Ser-42 and Thr-64.

The protein belongs to the TRAFAC class TrmE-Era-EngA-EngB-Septin-like GTPase superfamily. EngB GTPase family. The cofactor is Mg(2+).

Its function is as follows. Necessary for normal cell division and for the maintenance of normal septation. This Streptococcus agalactiae serotype III (strain NEM316) protein is Probable GTP-binding protein EngB.